The primary structure comprises 349 residues: Isopentenyl-diphosphate delta-isomerase (349 aa).

12-13 (RK) serves as a coordination point for substrate. FMN-binding positions include 69-71 (GMT), S99, and N128. Q158 serves as a coordination point for substrate. Residue E159 coordinates Mg(2+). FMN contacts are provided by residues K189, S214, T219, 265-267 (GIR), and 286-287 (SG).

Belongs to the IPP isomerase type 2 family. In terms of assembly, homooctamer. Dimer of tetramers. FMN serves as cofactor. NADPH is required as a cofactor. Requires Mg(2+) as cofactor.

Its subcellular location is the cytoplasm. The catalysed reaction is isopentenyl diphosphate = dimethylallyl diphosphate. In terms of biological role, involved in the biosynthesis of isoprenoids. Catalyzes the 1,3-allylic rearrangement of the homoallylic substrate isopentenyl (IPP) to its allylic isomer, dimethylallyl diphosphate (DMAPP). The sequence is that of Isopentenyl-diphosphate delta-isomerase from Latilactobacillus sakei subsp. sakei (strain 23K) (Lactobacillus sakei subsp. sakei).